We begin with the raw amino-acid sequence, 348 residues long: GMP reductase 2 (348 aa).

Residues 26-27 (SR), K78, 129-131 (DVA), and 180-181 (IG) contribute to the NADP(+) site. Residues G181, G183, and C186 each contribute to the K(+) site. C186 (thioimidate intermediate) is an active-site residue. T188 serves as the catalytic Proton donor/acceptor. Residue R189 coordinates K(+). GMP is bound by residues 219–221 (DGG), 242–243 (GG), 268–270 (GMS), and 286–290 (RASEG). Residues M269 and 285–286 (YR) each bind NADP(+). K291 is modified (N6-acetyllysine). 314–317 (STCT) lines the NADP(+) pocket.

Belongs to the IMPDH/GMPR family. GuaC type 1 subfamily. In terms of assembly, homotetramer.

It catalyses the reaction IMP + NH4(+) + NADP(+) = GMP + NADPH + 2 H(+). Functionally, catalyzes the irreversible NADPH-dependent deamination of GMP to IMP. It functions in the conversion of nucleobase, nucleoside and nucleotide derivatives of G to A nucleotides, and in maintaining the intracellular balance of A and G nucleotides. Plays a role in modulating cellular differentiation. This chain is GMP reductase 2, found in Mus musculus (Mouse).